Here is a 328-residue protein sequence, read N- to C-terminus: UPF0104 membrane protein AF_2231 (328 aa).

Helical transmembrane passes span 31 to 51 (NWLLLIVAFLLQVSFWLLWAL), 116 to 136 (ILDSMYFSTALPVFLIVTGFS), 139 to 159 (FGFKIAIIFITLLLVFLYILY), 221 to 241 (LVTLVMWSASFAIPSVILVAL), 245 to 265 (AYFLYSYTAQLIIVIVSLVPL), and 277 to 297 (MAYLYSNFVPTNVLGVLVGLW).

This sequence belongs to the UPF0104 family.

The protein localises to the cell membrane. The polypeptide is UPF0104 membrane protein AF_2231 (Archaeoglobus fulgidus (strain ATCC 49558 / DSM 4304 / JCM 9628 / NBRC 100126 / VC-16)).